Here is a 265-residue protein sequence, read N- to C-terminus: Zinc transporter ZupT (265 aa).

The next 8 helical transmembrane spans lie at 6 to 26 (IAFA…GGAL), 37 to 57 (FMAA…FMEI), 77 to 97 (WTMM…DRLV), 122 to 142 (GMFT…ATFL), 150 to 170 (IAIP…IAVA), 184 to 204 (FWWA…GFAL), 208 to 228 (FIGP…MVFI), and 245 to 265 (CAIY…ALFI). Fe(2+) contacts are provided by Asn133 and Glu136. Zn(2+) contacts are provided by Glu136 and His161. Fe(2+) is bound by residues Asn162, Glu165, and Glu194. Glu165 provides a ligand contact to Zn(2+).

This sequence belongs to the ZIP transporter (TC 2.A.5) family. ZupT subfamily.

The protein localises to the cell membrane. It catalyses the reaction Zn(2+)(in) = Zn(2+)(out). In terms of biological role, mediates zinc uptake. May also transport other divalent cations. This is Zinc transporter ZupT from Corynebacterium aurimucosum (strain ATCC 700975 / DSM 44827 / CIP 107346 / CN-1) (Corynebacterium nigricans).